The primary structure comprises 87 residues: MVNLCDLKKEPQINYPTFWDYKVIFEVHVKASEIFEEILGQREYKFKHSNSSASGKYQSYLLNVYVDSKKDRLDIFDKLKAKAKFVL.

This sequence to H.pylori HP0495/JHP0447.

This is an uncharacterized protein from Campylobacter jejuni subsp. jejuni serotype O:2 (strain ATCC 700819 / NCTC 11168).